We begin with the raw amino-acid sequence, 77 residues long: Translation initiation factor IF-1, chloroplastic (77 aa).

The region spanning 1-71 is the S1-like domain; sequence MKEQKWIHEG…TRGRIIYRLR (71 aa).

It belongs to the IF-1 family. As to quaternary structure, component of the 30S ribosomal translation pre-initiation complex which assembles on the 30S ribosome in the order IF-2 and IF-3, IF-1 and N-formylmethionyl-tRNA(fMet); mRNA recruitment can occur at any time during PIC assembly.

The protein resides in the plastid. It localises to the chloroplast. One of the essential components for the initiation of protein synthesis. Stabilizes the binding of IF-2 and IF-3 on the 30S subunit to which N-formylmethionyl-tRNA(fMet) subsequently binds. Helps modulate mRNA selection, yielding the 30S pre-initiation complex (PIC). Upon addition of the 50S ribosomal subunit IF-1, IF-2 and IF-3 are released leaving the mature 70S translation initiation complex. The polypeptide is Translation initiation factor IF-1, chloroplastic (Lactuca sativa (Garden lettuce)).